The primary structure comprises 159 residues: MKIRILTIGQKMPAWVLTGFEDYFKRIQPFVQTQVIKLPMAKRGKNDSEADILKYCQIEGESILNALKPNETLIALEVGGRELSTEKLADTMKQWMLEGNDVALAIGGPDGLSDQVRKAAAWHWSLSKLTMPHPLVRILLIEQLYRAMSINHNHPYHRA.

Residues L76, G107, and 126-131 (LSKLTM) each bind S-adenosyl-L-methionine.

The protein belongs to the RNA methyltransferase RlmH family. As to quaternary structure, homodimer.

The protein resides in the cytoplasm. It carries out the reaction pseudouridine(1915) in 23S rRNA + S-adenosyl-L-methionine = N(3)-methylpseudouridine(1915) in 23S rRNA + S-adenosyl-L-homocysteine + H(+). Its function is as follows. Specifically methylates the pseudouridine at position 1915 (m3Psi1915) in 23S rRNA. The chain is Ribosomal RNA large subunit methyltransferase H from Acinetobacter baumannii (strain SDF).